The chain runs to 689 residues: Solute carrier family 22 member 23 (689 aa).

Disordered stretches follow at residues 1–55 and 162–188; these read MAID…PLPA and TASW…GKGN. An N-linked (GlcNAc...) asparagine glycan is attached at Asn24. Residues 165–177 are compositionally biased toward polar residues; the sequence is WGTTSNRSNSSDT. The next 2 membrane-spanning stretches (helical) occupy residues 229 to 249 and 253 to 273; these read FSLL…ADWV and PVLL…ALSV. The N-linked (GlcNAc...) asparagine glycan is linked to Asn274. 8 helical membrane passes run 283–303, 310–330, 339–359, 466–486, 489–509, 541–561, 572–592, and 601–621; these read FFEG…RIEL, FIIT…MPGL, VLQA…SIFP, TMAS…KFLG, GGLL…LGLL, IAFS…SVFF, CGGL…APII, and FLHH…ILLL.

The protein belongs to the major facilitator (TC 2.A.1) superfamily. Organic cation transporter (TC 2.A.1.19) family.

Its subcellular location is the membrane. The chain is Solute carrier family 22 member 23 (Slc22a23) from Mus musculus (Mouse).